An 802-amino-acid chain; its full sequence is ATP-dependent zinc metalloprotease FTSH 3, mitochondrial (802 aa).

A mitochondrion-targeting transit peptide spans 1–21 (MSLSSLSRALARSARSSRQRQ). Over residues 1–23 (MSLSSLSRALARSARSSRQRQGS) the composition is skewed to low complexity. 2 disordered regions span residues 1–33 (MSLSSLSRALARSARSSRQRQGSLLGGHGGLRA) and 85–120 (DKSKKNHGKHSEEENKGKGDESDKSDSKKQSSSGDQ). Over residues 85–113 (DKSKKNHGKHSEEENKGKGDESDKSDSKK) the composition is skewed to basic and acidic residues. A helical transmembrane segment spans residues 133–153 (MIAPLFLFGLLLLSASASSSE). 360–367 (GPPGTGKT) contributes to the ATP binding site. H585 contacts Zn(2+). E586 is an active-site residue. Zn(2+) is bound by residues H589 and D661. The segment at 773–802 (KQGFQDEDSNRNAELSNADGASSLGEAVAS) is disordered.

It in the N-terminal section; belongs to the AAA ATPase family. In the C-terminal section; belongs to the peptidase M41 family. Zn(2+) serves as cofactor.

Its subcellular location is the mitochondrion inner membrane. In terms of biological role, probable ATP-dependent zinc metallopeptidase. The polypeptide is ATP-dependent zinc metalloprotease FTSH 3, mitochondrial (FTSH3) (Oryza sativa subsp. japonica (Rice)).